The chain runs to 344 residues: Uroporphyrinogen decarboxylase (344 aa).

Substrate-binding positions include 23–27 (RQAGR), aspartate 73, tyrosine 149, threonine 204, and histidine 321.

It belongs to the uroporphyrinogen decarboxylase family. In terms of assembly, homodimer.

The protein resides in the cytoplasm. The enzyme catalyses uroporphyrinogen III + 4 H(+) = coproporphyrinogen III + 4 CO2. It functions in the pathway porphyrin-containing compound metabolism; protoporphyrin-IX biosynthesis; coproporphyrinogen-III from 5-aminolevulinate: step 4/4. Catalyzes the decarboxylation of four acetate groups of uroporphyrinogen-III to yield coproporphyrinogen-III. This Francisella tularensis subsp. holarctica (strain LVS) protein is Uroporphyrinogen decarboxylase.